Consider the following 99-residue polypeptide: Cobalt transport protein CbiN (99 aa).

2 helical membrane passes run 6–26 and 68–88; these read VLMIIGIIILTIAPLVMYSGL and SLLFALQAAIGAIIIGYFFGY.

The protein belongs to the CbiN family. In terms of assembly, forms an energy-coupling factor (ECF) transporter complex composed of an ATP-binding protein (A component, CbiO), a transmembrane protein (T component, CbiQ) and 2 possible substrate-capture proteins (S components, CbiM and CbiN) of unknown stoichimetry.

The protein localises to the cell membrane. It functions in the pathway cofactor biosynthesis; adenosylcobalamin biosynthesis. In terms of biological role, part of the energy-coupling factor (ECF) transporter complex CbiMNOQ involved in cobalt import. The sequence is that of Cobalt transport protein CbiN from Methanococcus vannielii (strain ATCC 35089 / DSM 1224 / JCM 13029 / OCM 148 / SB).